Consider the following 193-residue polypeptide: Potassium-transporting ATPase KdpC subunit (193 aa).

A helical membrane pass occupies residues 14–34 (ITFTFLVLCGLVYPLIVTGIA).

It belongs to the KdpC family. As to quaternary structure, the system is composed of three essential subunits: KdpA, KdpB and KdpC.

It is found in the cell membrane. Functionally, part of the high-affinity ATP-driven potassium transport (or Kdp) system, which catalyzes the hydrolysis of ATP coupled with the electrogenic transport of potassium into the cytoplasm. This subunit acts as a catalytic chaperone that increases the ATP-binding affinity of the ATP-hydrolyzing subunit KdpB by the formation of a transient KdpB/KdpC/ATP ternary complex. The protein is Potassium-transporting ATPase KdpC subunit of Bacillus thuringiensis subsp. konkukian (strain 97-27).